Here is a 304-residue protein sequence, read N- to C-terminus: tRNA-5-methyluridine(54) 2-sulfurtransferase (304 aa).

The Zn(2+) site is built by Cys-3, Cys-6, Cys-22, and His-25. Positions 53 and 79 each coordinate ATP. Cys-131 and Cys-134 together coordinate [4Fe-4S] cluster. 2 residues coordinate ATP: Arg-138 and Gly-157. Cys-224 is a binding site for [4Fe-4S] cluster. Residues Cys-274, Cys-277, Cys-286, and Cys-289 each coordinate Zn(2+).

This sequence belongs to the TtcA family. TtuA subfamily. Homodimer. [4Fe-4S] cluster serves as cofactor. Mg(2+) is required as a cofactor.

The catalysed reaction is 5-methyluridine(54) in tRNA + hydrogen sulfide + ATP = 5-methyl-2-thiouridine(54) in tRNA + AMP + diphosphate. Its pathway is tRNA modification. Its function is as follows. Catalyzes the ATP-dependent 2-thiolation of 5-methyluridine residue at position 54 in the T loop of tRNAs, leading to 5-methyl-2-thiouridine (m(5)s(2)U or s(2)T). This modification allows thermal stabilization of tRNAs in thermophilic microorganisms, and is required for cell growth at high temperatures. Can use free sulfide as sulfur source in vitro. This is tRNA-5-methyluridine(54) 2-sulfurtransferase from Thermotoga maritima (strain ATCC 43589 / DSM 3109 / JCM 10099 / NBRC 100826 / MSB8).